A 542-amino-acid chain; its full sequence is Protein lin-9 homolog (542 aa).

Ala-2 is modified (N-acetylalanine). The tract at residues 2–296 is sufficient for interaction with RB1; the sequence is AELDQLPDES…QKQRPSRFFM (295 aa). Lys-21 participates in a covalent cross-link: Glycyl lysine isopeptide (Lys-Gly) (interchain with G-Cter in SUMO2). A phosphoserine mark is found at Ser-65 and Ser-95. Thr-96 and Thr-304 each carry phosphothreonine. A phosphoserine mark is found at Ser-309 and Ser-321. The stretch at 354-413 forms a coiled coil; it reads MIKKEHIKKLREMNTEAEKLKSYSMPISIEFQRRYATIVLELEQLNKDLNKVLHKVQQYC.

This sequence belongs to the lin-9 family. In terms of assembly, component of the DREAM complex (also named LINC complex) at least composed of E2F4, E2F5, LIN9, LIN37, LIN52, LIN54, MYBL1, MYBL2, RBL1, RBL2, RBBP4, TFDP1 and TFDP2. The complex exists in quiescent cells where it represses cell cycle-dependent genes. It dissociates in S phase when LIN9, LIN37, LIN52 and LIN54 form a subcomplex that binds to MYBL2. Interacts with RB1. As to expression, expressed in thymus and testis.

It localises to the nucleus. It is found in the nucleoplasm. Functionally, acts as a tumor suppressor. Inhibits DNA synthesis. Its ability to inhibit oncogenic transformation is mediated through its association with RB1. Plays a role in the expression of genes required for the G1/S transition. The protein is Protein lin-9 homolog (LIN9) of Homo sapiens (Human).